A 278-amino-acid chain; its full sequence is Small ribosomal subunit protein uS2 (278 aa).

The segment at 235–278 (AEAAEEAPKRERKAKAAVKKERTKKEDDDALNANVAGKFAKDEE) is disordered. Basic and acidic residues predominate over residues 252–261 (VKKERTKKED).

It belongs to the universal ribosomal protein uS2 family.

The polypeptide is Small ribosomal subunit protein uS2 (Parabacteroides distasonis (strain ATCC 8503 / DSM 20701 / CIP 104284 / JCM 5825 / NCTC 11152)).